Here is a 187-residue protein sequence, read N- to C-terminus: GTP cyclohydrolase 1 (187 aa).

Residues Cys-76, His-79, and Cys-148 each coordinate Zn(2+).

Belongs to the GTP cyclohydrolase I family. Toroid-shaped homodecamer, composed of two pentamers of five dimers.

It catalyses the reaction GTP + H2O = 7,8-dihydroneopterin 3'-triphosphate + formate + H(+). The protein operates within cofactor biosynthesis; 7,8-dihydroneopterin triphosphate biosynthesis; 7,8-dihydroneopterin triphosphate from GTP: step 1/1. The protein is GTP cyclohydrolase 1 of Streptococcus agalactiae serotype V (strain ATCC BAA-611 / 2603 V/R).